Here is a 245-residue protein sequence, read N- to C-terminus: Ribosomal RNA large subunit methyltransferase E (245 aa).

The S-adenosyl-L-methionine site is built by Gly-83, Trp-85, Asp-111, Asp-127, and Asp-156. Catalysis depends on Lys-196, which acts as the Proton acceptor.

Belongs to the class I-like SAM-binding methyltransferase superfamily. RNA methyltransferase RlmE family.

The protein resides in the cytoplasm. It catalyses the reaction uridine(2552) in 23S rRNA + S-adenosyl-L-methionine = 2'-O-methyluridine(2552) in 23S rRNA + S-adenosyl-L-homocysteine + H(+). Specifically methylates the uridine in position 2552 of 23S rRNA at the 2'-O position of the ribose in the fully assembled 50S ribosomal subunit. This chain is Ribosomal RNA large subunit methyltransferase E, found in Polaromonas naphthalenivorans (strain CJ2).